The sequence spans 445 residues: Phosphoglucosamine mutase (445 aa).

Catalysis depends on serine 102, which acts as the Phosphoserine intermediate. Residues serine 102, aspartate 241, aspartate 243, and aspartate 245 each contribute to the Mg(2+) site. Serine 102 carries the phosphoserine modification.

This sequence belongs to the phosphohexose mutase family. It depends on Mg(2+) as a cofactor. Activated by phosphorylation.

It catalyses the reaction alpha-D-glucosamine 1-phosphate = D-glucosamine 6-phosphate. Its function is as follows. Catalyzes the conversion of glucosamine-6-phosphate to glucosamine-1-phosphate. The polypeptide is Phosphoglucosamine mutase (Rhodococcus opacus (strain B4)).